Here is a 233-residue protein sequence, read N- to C-terminus: ATP synthase subunit a, chloroplastic (233 aa).

Transmembrane regions (helical) follow at residues 82-102 (VPFI…GALI), 121-141 (INTT…AGIS), 177-199 (LFGN…PLIV), and 211-231 (SSIQ…EAIE).

Belongs to the ATPase A chain family. F-type ATPases have 2 components, CF(1) - the catalytic core - and CF(0) - the membrane proton channel. CF(1) has five subunits: alpha(3), beta(3), gamma(1), delta(1), epsilon(1). CF(0) has four main subunits: a, b, b' and c.

The protein resides in the plastid. It is found in the chloroplast thylakoid membrane. Key component of the proton channel; it plays a direct role in the translocation of protons across the membrane. This chain is ATP synthase subunit a, chloroplastic, found in Galdieria sulphuraria (Red alga).